Reading from the N-terminus, the 155-residue chain is Large ribosomal subunit protein uL15 (155 aa).

Residues 1-13 are compositionally biased toward basic and acidic residues; that stretch reads MKLNELRDCEGAT. The disordered stretch occupies residues 1 to 47; that stretch reads MKLNELRDCEGATKNRKRIGRGIGSGTGKTGGRGVKGQKSRSGVSLN. The span at 21 to 35 shows a compositional bias: gly residues; it reads RGIGSGTGKTGGRGV.

It belongs to the universal ribosomal protein uL15 family. As to quaternary structure, part of the 50S ribosomal subunit.

Functionally, binds to the 23S rRNA. This chain is Large ribosomal subunit protein uL15, found in Bartonella tribocorum (strain CIP 105476 / IBS 506).